The primary structure comprises 513 residues: Noroxomaritidine synthase 2 (513 aa).

Residues 14-34 form a helical membrane-spanning segment; sequence HYPEILIAIACFLIFSLLLSA. Cys-458 serves as a coordination point for heme.

This sequence belongs to the cytochrome P450 family. Heme is required as a cofactor.

It is found in the membrane. It catalyses the reaction 4'-O-methylnorbelladine + reduced [NADPH--hemoprotein reductase] + O2 = (10bR,4aS)-noroxomaritidine + oxidized [NADPH--hemoprotein reductase] + 2 H2O + H(+). The catalysed reaction is 4'-O-methylnorbelladine + reduced [NADPH--hemoprotein reductase] + O2 = (10bS,4aR)-noroxomaritidine + oxidized [NADPH--hemoprotein reductase] + 2 H2O + H(+). It participates in alkaloid biosynthesis. In terms of biological role, cytochrome P450 that catalyzes an intramolecular para-para' C-C phenol coupling of 4'-O-methylnorbelladine in alkaloids biosynthesis, including haemanthamine- and crinamine-type alkaloids, promising anticancer agents. Catalyzes the formation of (10bR,4aS)-noroxomaritidine and (10bS,4aR)-noroxomaritidine from 4'-O-methylnorbelladine. The protein is Noroxomaritidine synthase 2 of Narcissus aff. pseudonarcissus MK-2014 (Daffodil).